The primary structure comprises 146 residues: Large-conductance mechanosensitive channel (146 aa).

The next 3 membrane-spanning stretches (helical) occupy residues 17 to 37 (IDLA…DSLV), 40 to 60 (IIMP…QKFV), and 89 to 109 (LTIL…VKLI).

It belongs to the MscL family. Homopentamer.

It localises to the cell inner membrane. Functionally, channel that opens in response to stretch forces in the membrane lipid bilayer. May participate in the regulation of osmotic pressure changes within the cell. The polypeptide is Large-conductance mechanosensitive channel (Acinetobacter baylyi (strain ATCC 33305 / BD413 / ADP1)).